Here is an 887-residue protein sequence, read N- to C-terminus: Protein PTHB1 (887 aa).

Residues methionine 1–arginine 407 form a seven-bladed beta-propeller region. Residues lysine 685–glutamate 765 are interaction with LZTL1. The interval aspartate 850–glutamate 887 is disordered.

In terms of assembly, part of BBSome complex, that contains BBS1, BBS2, BBS4, BBS5, BBS7, BBS8/TTC8, BBS9 and BBIP10. Interacts with LZTL1; the interaction mediates the association of LZTL1 with the BBsome complex and regulates BBSome ciliary trafficking. In terms of tissue distribution, widely expressed. Expressed in adult heart, skeletal muscle, lung, liver, kidney, placenta and brain, and in fetal kidney, lung, liver and brain.

The protein resides in the cytoplasm. The protein localises to the cytoskeleton. It is found in the microtubule organizing center. Its subcellular location is the centrosome. It localises to the cell projection. The protein resides in the cilium membrane. The protein localises to the centriolar satellite. Its function is as follows. The BBSome complex is thought to function as a coat complex required for sorting of specific membrane proteins to the primary cilia. The BBSome complex is required for ciliogenesis but is dispensable for centriolar satellite function. This ciliogenic function is mediated in part by the Rab8 GDP/GTP exchange factor, which localizes to the basal body and contacts the BBSome. Rab8(GTP) enters the primary cilium and promotes extension of the ciliary membrane. Firstly the BBSome associates with the ciliary membrane and binds to RAB3IP/Rabin8, the guanosyl exchange factor (GEF) for Rab8 and then the Rab8-GTP localizes to the cilium and promotes docking and fusion of carrier vesicles to the base of the ciliary membrane. Required for proper BBSome complex assembly and its ciliary localization. This chain is Protein PTHB1 (BBS9), found in Homo sapiens (Human).